Consider the following 914-residue polypeptide: Protein translocase subunit SecA (914 aa).

ATP is bound by residues Gln-86, 104 to 108 (GEGKT), and Asp-512. Positions 898, 900, 909, and 910 each coordinate Zn(2+).

Belongs to the SecA family. As to quaternary structure, monomer and homodimer. Part of the essential Sec protein translocation apparatus which comprises SecA, SecYEG and auxiliary proteins SecDF-YajC and YidC. Zn(2+) is required as a cofactor.

The protein localises to the cell inner membrane. It localises to the cytoplasm. It catalyses the reaction ATP + H2O + cellular proteinSide 1 = ADP + phosphate + cellular proteinSide 2.. Functionally, part of the Sec protein translocase complex. Interacts with the SecYEG preprotein conducting channel. Has a central role in coupling the hydrolysis of ATP to the transfer of proteins into and across the cell membrane, serving both as a receptor for the preprotein-SecB complex and as an ATP-driven molecular motor driving the stepwise translocation of polypeptide chains across the membrane. The chain is Protein translocase subunit SecA from Bordetella petrii (strain ATCC BAA-461 / DSM 12804 / CCUG 43448).